A 468-amino-acid polypeptide reads, in one-letter code: 6-phosphogluconate dehydrogenase, decarboxylating (468 aa).

Residues 9–14 (GLAVMG), 32–34 (NRS), 73–75 (VKA), and asparagine 101 each bind NADP(+). Substrate is bound by residues asparagine 101 and 127 to 129 (SGG). The active-site Proton acceptor is the lysine 182. 185–186 (HN) serves as a coordination point for substrate. Glutamate 189 (proton donor) is an active-site residue. Residues tyrosine 190, lysine 259, arginine 286, arginine 444, and histidine 450 each coordinate substrate.

It belongs to the 6-phosphogluconate dehydrogenase family. As to quaternary structure, homodimer.

The enzyme catalyses 6-phospho-D-gluconate + NADP(+) = D-ribulose 5-phosphate + CO2 + NADPH. The protein operates within carbohydrate degradation; pentose phosphate pathway; D-ribulose 5-phosphate from D-glucose 6-phosphate (oxidative stage): step 3/3. Functionally, catalyzes the oxidative decarboxylation of 6-phosphogluconate to ribulose 5-phosphate and CO(2), with concomitant reduction of NADP to NADPH. The chain is 6-phosphogluconate dehydrogenase, decarboxylating (gnd) from Staphylococcus epidermidis (strain ATCC 35984 / DSM 28319 / BCRC 17069 / CCUG 31568 / BM 3577 / RP62A).